We begin with the raw amino-acid sequence, 449 residues long: Trigger factor (449 aa).

A PPIase FKBP-type domain is found at 162 to 242 (GDFVTIDMTV…VRAVREKQVP (81 aa)). A disordered region spans residues 428-449 (APVNLEGGSTPAAEAEPAVSEA). Over residues 438 to 449 (PAAEAEPAVSEA) the composition is skewed to low complexity.

This sequence belongs to the FKBP-type PPIase family. Tig subfamily.

It is found in the cytoplasm. It carries out the reaction [protein]-peptidylproline (omega=180) = [protein]-peptidylproline (omega=0). Involved in protein export. Acts as a chaperone by maintaining the newly synthesized protein in an open conformation. Functions as a peptidyl-prolyl cis-trans isomerase. The polypeptide is Trigger factor (Acidothermus cellulolyticus (strain ATCC 43068 / DSM 8971 / 11B)).